Reading from the N-terminus, the 406-residue chain is Indole-3-pyruvate monooxygenase YUCCA1 (406 aa).

Residue 21-26 coordinates FAD; that stretch reads GAGPSG. 184 to 189 serves as a coordination point for NADP(+); sequence GCGNSG.

This sequence belongs to the FMO family. FAD serves as cofactor. As to expression, expressed in coleoptile tips, root tips, leaf blade tips, shoot apical meristem, vasculature of stems and flowers.

The catalysed reaction is indole-3-pyruvate + NADPH + O2 + H(+) = (indol-3-yl)acetate + CO2 + NADP(+) + H2O. Its function is as follows. Involved in auxin biosynthesis. Converts the indole-3-pyruvic acid (IPA) produced by the TAA family to indole-3-acetic acid (IAA). Functions downstream of TAR2 in auxin biosynthesis. Functions upstream of WOX11, a transcription factor that promotes the development of crown roots. This is Indole-3-pyruvate monooxygenase YUCCA1 from Oryza sativa subsp. japonica (Rice).